We begin with the raw amino-acid sequence, 396 residues long: NADH-quinone oxidoreductase subunit D (396 aa).

Belongs to the complex I 49 kDa subunit family. In terms of assembly, NDH-1 is composed of 14 different subunits. Subunits NuoB, C, D, E, F, and G constitute the peripheral sector of the complex.

It is found in the cell inner membrane. The catalysed reaction is a quinone + NADH + 5 H(+)(in) = a quinol + NAD(+) + 4 H(+)(out). Its function is as follows. NDH-1 shuttles electrons from NADH, via FMN and iron-sulfur (Fe-S) centers, to quinones in the respiratory chain. The immediate electron acceptor for the enzyme in this species is believed to be ubiquinone. Couples the redox reaction to proton translocation (for every two electrons transferred, four hydrogen ions are translocated across the cytoplasmic membrane), and thus conserves the redox energy in a proton gradient. The polypeptide is NADH-quinone oxidoreductase subunit D (Methylobacterium sp. (strain 4-46)).